A 644-amino-acid chain; its full sequence is Exoribonuclease 2 (644 aa).

The RNB domain maps to 189 to 516 (RRDLTALNFV…NHRLLKAIVK (328 aa)). In terms of domain architecture, S1 motif spans 561–643 (DTRFAAEIID…ETRSIIARPV (83 aa)).

The protein belongs to the RNR ribonuclease family. RNase II subfamily.

The protein localises to the cytoplasm. It catalyses the reaction Exonucleolytic cleavage in the 3'- to 5'-direction to yield nucleoside 5'-phosphates.. Its function is as follows. Involved in mRNA degradation. Hydrolyzes single-stranded polyribonucleotides processively in the 3' to 5' direction. This is Exoribonuclease 2 from Enterobacter sp. (strain 638).